A 226-amino-acid polypeptide reads, in one-letter code: Putative integrase V10 (226 aa).

Residues Arg-97, His-174, and Arg-177 contribute to the active site. The O-(3'-phospho-DNA)-tyrosine intermediate role is filled by Tyr-210.

The protein belongs to the 'phage' integrase family.

May catalyze site-specific integration of viral genome into host or helper virus DNA. The protein is Putative integrase V10 of Acanthamoeba polyphaga (Amoeba).